We begin with the raw amino-acid sequence, 134 residues long: Protein NrdI (134 aa).

Belongs to the NrdI family.

Probably involved in ribonucleotide reductase function. The chain is Protein NrdI from Rhizobium leguminosarum bv. trifolii (strain WSM2304).